Reading from the N-terminus, the 587-residue chain is 65-kDa microtubule-associated protein 1 (587 aa).

5 coiled-coil regions span residues 46–84, 151–181, 234–257, 290–317, and 461–489; these read QECL…TMSL, DESD…LRKV, LTLK…LIDL, ALAR…MKEI, and AMLD…VQEQ. Residues 474-494 are compositionally biased toward basic and acidic residues; the sequence is EEEKRRLREQKKVQEQPHVEQ. The segment at 474-587 is disordered; that stretch reads EEEKRRLREQ…AADHQVPASP (114 aa). Serine 503 carries the phosphoserine modification. At threonine 526 the chain carries Phosphothreonine. The segment covering 531 to 542 has biased composition (polar residues); it reads LSLNANQNGSRS. Residues serine 532 and serine 540 each carry the phosphoserine modification. 2 positions are modified to phosphothreonine: threonine 543 and threonine 552. The span at 543 to 553 shows a compositional bias: basic and acidic residues; it reads TAKEAGRRETL. A phosphoserine mark is found at serine 573, serine 576, and serine 586.

This sequence belongs to the MAP65/ASE1 family. In terms of assembly, forms dimer. Binds to MT, mostly with coaligned MT, both between parallel or antiparallel, forming thick bundles. Interacts with the alpha-tubulin subunit of the tubulin heterodimer. Bundles polymerized MT via the formation of 25-nm crossbridges at specific stages of the cell cycle (e.g. bundles microtubules in interphase, anaphase and telophase but does not bind microtubules in prophase or metaphase), at the plus-end, the minus-end, or along the entire length of MT, and along phragmoplast MT. Interacts with SH3P1 and MPK4. Basal phosphorylation at all stages of the cell cycle. MT-binding properties inhibited by hyperphosphorylation mediated by CDKs and/or MAPKs (e.g. ANP2, ANP3, MPK4 and MPK6) during prometaphase and metaphase. As to expression, expressed in all organs and tissues with the exception of sepals and anthers. Bound to subsets of microtubules in the cells of root epidermis, hypocotyl and cotyledons (at protein level).

It is found in the nucleus. The protein localises to the cytoplasm. It localises to the cytoskeleton. The protein resides in the spindle. Its subcellular location is the phragmoplast. It is found in the cell cortex. Its function is as follows. Microtubule-associated protein that bundle and stabilize adjacent microtubules (MT) of the cell cortex. Enhances MT nucleation. Can also bind to tubulin dimers and promotes their polymerization. Confers MT resistance to the drug propyzamide and cold conditions. Plays a role in the central spindle at anaphase to early cytokinesis but is not essential at the midline of the phragmoplast at later stages. Represses metaphase spindle organization and the transition to anaphase in dephosphorylated active form. Promotes the formation of a planar network of antiparallel microtubules. May be involved in stomatal movement modulation by regulating the dynamic and arrangement of cortical MT. This is 65-kDa microtubule-associated protein 1 (MAP65-1) from Arabidopsis thaliana (Mouse-ear cress).